We begin with the raw amino-acid sequence, 313 residues long: GTPase Era (313 aa).

Residues 20–187 form the Era-type G domain; the sequence is RSGFVALIGA…MDYLAETLPE (168 aa). Residues 28-35 form a G1 region; sequence GATNAGKS. GTP is bound at residue 28–35; the sequence is GATNAGKS. The interval 54–58 is G2; sequence QTTRA. Residues 75–78 form a G3 region; the sequence is DTPG. Residues 75–79 and 137–140 contribute to the GTP site; these read DTPGI and NKVD. Positions 137 to 140 are G4; it reads NKVD. The tract at residues 166 to 168 is G5; that stretch reads ISA. Positions 218–295 constitute a KH type-2 domain; it reads LHQELPYASH…HLFLFVKVRE (78 aa).

Belongs to the TRAFAC class TrmE-Era-EngA-EngB-Septin-like GTPase superfamily. Era GTPase family. In terms of assembly, monomer.

The protein localises to the cytoplasm. It localises to the cell inner membrane. Its function is as follows. An essential GTPase that binds both GDP and GTP, with rapid nucleotide exchange. Plays a role in 16S rRNA processing and 30S ribosomal subunit biogenesis and possibly also in cell cycle regulation and energy metabolism. This Rhizobium meliloti (strain 1021) (Ensifer meliloti) protein is GTPase Era.